The primary structure comprises 638 residues: 1-deoxy-D-xylulose-5-phosphate synthase (638 aa).

Thiamine diphosphate contacts are provided by residues H76 and 117 to 119 (AHS). D148 contacts Mg(2+). Residues 149 to 150 (GS), N177, Y287, and E369 contribute to the thiamine diphosphate site. Mg(2+) is bound at residue N177.

This sequence belongs to the transketolase family. DXPS subfamily. In terms of assembly, homodimer. Requires Mg(2+) as cofactor. The cofactor is thiamine diphosphate.

It catalyses the reaction D-glyceraldehyde 3-phosphate + pyruvate + H(+) = 1-deoxy-D-xylulose 5-phosphate + CO2. It functions in the pathway metabolic intermediate biosynthesis; 1-deoxy-D-xylulose 5-phosphate biosynthesis; 1-deoxy-D-xylulose 5-phosphate from D-glyceraldehyde 3-phosphate and pyruvate: step 1/1. Its function is as follows. Catalyzes the acyloin condensation reaction between C atoms 2 and 3 of pyruvate and glyceraldehyde 3-phosphate to yield 1-deoxy-D-xylulose-5-phosphate (DXP). The polypeptide is 1-deoxy-D-xylulose-5-phosphate synthase (Rhodopseudomonas palustris (strain HaA2)).